Here is a 440-residue protein sequence, read N- to C-terminus: Aspartokinase (440 aa).

This sequence belongs to the aspartokinase family.

The catalysed reaction is L-aspartate + ATP = 4-phospho-L-aspartate + ADP. Its pathway is amino-acid biosynthesis; L-lysine biosynthesis via DAP pathway; (S)-tetrahydrodipicolinate from L-aspartate: step 1/4. It functions in the pathway amino-acid biosynthesis; L-methionine biosynthesis via de novo pathway; L-homoserine from L-aspartate: step 1/3. The protein operates within amino-acid biosynthesis; L-threonine biosynthesis; L-threonine from L-aspartate: step 1/5. The sequence is that of Aspartokinase (lysC) from Chlamydia pneumoniae (Chlamydophila pneumoniae).